The primary structure comprises 873 residues: Alanine--tRNA ligase (873 aa).

Zn(2+) contacts are provided by His-562, His-566, Cys-664, and His-668.

Belongs to the class-II aminoacyl-tRNA synthetase family. Zn(2+) serves as cofactor.

Its subcellular location is the cytoplasm. The catalysed reaction is tRNA(Ala) + L-alanine + ATP = L-alanyl-tRNA(Ala) + AMP + diphosphate. In terms of biological role, catalyzes the attachment of alanine to tRNA(Ala) in a two-step reaction: alanine is first activated by ATP to form Ala-AMP and then transferred to the acceptor end of tRNA(Ala). Also edits incorrectly charged Ser-tRNA(Ala) and Gly-tRNA(Ala) via its editing domain. In Photobacterium profundum (strain SS9), this protein is Alanine--tRNA ligase.